Consider the following 381-residue polypeptide: tRNA-specific 2-thiouridylase MnmA (381 aa).

Residues 9–16 (GMSGGVDS) and Met35 each bind ATP. Residues 95-97 (NPD) form an interaction with target base in tRNA region. Cys100 functions as the Nucleophile in the catalytic mechanism. Cysteines 100 and 196 form a disulfide. Residue Gly124 coordinates ATP. Residues 146–148 (KDQ) form an interaction with tRNA region. Catalysis depends on Cys196, which acts as the Cysteine persulfide intermediate. The interaction with tRNA stretch occupies residues 308–309 (RY).

This sequence belongs to the MnmA/TRMU family.

It is found in the cytoplasm. It catalyses the reaction S-sulfanyl-L-cysteinyl-[protein] + uridine(34) in tRNA + AH2 + ATP = 2-thiouridine(34) in tRNA + L-cysteinyl-[protein] + A + AMP + diphosphate + H(+). Functionally, catalyzes the 2-thiolation of uridine at the wobble position (U34) of tRNA, leading to the formation of s(2)U34. The polypeptide is tRNA-specific 2-thiouridylase MnmA (Paraburkholderia xenovorans (strain LB400)).